The chain runs to 451 residues: 2,4-dinitrotoluene dioxygenase system, large oxygenase component (451 aa).

Positions 42 to 126 (WLFLTHDSLI…LQSVPFEKEL (85 aa)) constitute a Rieske domain. Positions 84, 86, 104, and 107 each coordinate [2Fe-2S] cluster. Fe cation contacts are provided by H211, H216, and D365.

The protein belongs to the bacterial ring-hydroxylating dioxygenase alpha subunit family. In terms of assembly, the 2,4-dinitrotoluene dioxygenase (DNTDO) multicomponent enzyme system is composed of an electron transfer component and a dioxygenase component (iron sulfur protein (ISP)). The electron transfer component is composed of a ferredoxin reductase (DntAa) and a ferredoxin (DntAb), and the dioxygenase component is formed of a large alpha subunit (DntAc) and a small beta subunit (DntAd). It depends on [2Fe-2S] cluster as a cofactor. The cofactor is Fe(2+).

The enzyme catalyses 2,4-dinitrotoluene + NADH + O2 = 4-methyl-5-nitrocatechol + nitrite + NAD(+). Component of the 2,4-dinitrotoluene dioxygenase (DNTDO) multicomponent enzyme system which catalyzes the incorporation of both atoms of molecular oxygen into 2,4-dinitrotoluene (DNT) to form 4-methyl-5-nitrocatechol (MNC) and nitrite. The alpha subunit has a catalytic role in the holoenzyme. Also able to convert naphthalene to cis-(1R,2S)-dihydroxy-1,2-dihydronaphthalene. The polypeptide is 2,4-dinitrotoluene dioxygenase system, large oxygenase component (Burkholderia sp. (strain RASC)).